The following is a 261-amino-acid chain: Matrix metalloproteinase-26 (261 aa).

The first 17 residues, 1 to 17, serve as a signal peptide directing secretion; sequence MQLVILRVTIFLPWCFA. Residues 18–89 constitute a propeptide that is removed on maturation; that stretch reads VPVPPAADHK…PHCGVPDGSD (72 aa). An N-linked (GlcNAc...) asparagine glycan is attached at N64. A Cysteine switch motif is present at residues 80-87; it reads PHCGVPDG. The Zn(2+) site is built by C82 and H208. The active site involves E209. Positions 212 and 218 each coordinate Zn(2+). N221 carries an N-linked (GlcNAc...) asparagine glycan.

Belongs to the peptidase M10A family. Requires Zn(2+) as cofactor. Ca(2+) is required as a cofactor. As to expression, expressed specifically in uterus and placenta. Is also widely expressed in malignant tumors from different sources as well as in diverse tumor cell lines.

It is found in the secreted. The protein localises to the extracellular space. It localises to the extracellular matrix. In terms of biological role, may hydrolyze collagen type IV, fibronectin, fibrinogen, beta-casein, type I gelatin and alpha-1 proteinase inhibitor. Is also able to activate progelatinase B. In Homo sapiens (Human), this protein is Matrix metalloproteinase-26 (MMP26).